A 481-amino-acid polypeptide reads, in one-letter code: Protein hedgehog (481 aa).

Residue Cys-93 is the site of N-palmitoyl cysteine attachment. Glu-157, Glu-158, Asp-163, Thr-193, Glu-194, Asp-197, and Asp-199 together coordinate Ca(2+). Residue Gly-265 is the site of Cholesterol glycine ester attachment.

This sequence belongs to the hedgehog family. Interacts with shf. Post-translationally, the C-terminal part of the hedgehog protein precursor displays an autoproteolysis activity that results in the cleavage of the full-length protein into two parts (N-product and C-product). In addition, the C-terminal part displays a cholesterol transferase activity that results by the covalent attachment of a cholesterol moiety to the C-terminal of the newly generated N-product. The N-product is the active species in both local and long-range signaling, whereas the C-product has no signaling activity. Cholesterylation is required for N-product targeting to lipid rafts and multimerization. In terms of processing, N-palmitoylation by Rasp of the hedgehog N-product, within the secretory pathway, is required for the embryonic and larval patterning activities of the hedgehog signal.

Its subcellular location is the nucleus. The protein localises to the cytoplasm. It localises to the cell membrane. It catalyses the reaction glycyl-L-cysteinyl-[protein] + cholesterol + H(+) = [protein]-C-terminal glycyl cholesterol ester + N-terminal L-cysteinyl-[protein]. The C-terminal part of the hedgehog protein precursor displays an autoproteolysis activity that results in the cleavage of the full-length protein into two parts (N-product and C-product). In addition, the C-terminal part displays a cholesterol transferase activity that results by the covalent attachment of a cholesterol moiety to the C-terminal of the newly generated N-product. Once cleaved, the C-product has no signaling activity and diffuses from the cell. Functionally, the dually lipidated hedgehog protein N-product is a morphogen which is essential for a variety of patterning events during development. Establishes the anterior-posterior axis of the embryonic segments and patterns the larval imaginal disks. Binds to the patched (ptc) receptor, which functions in association with smoothened (smo), to activate the transcription of target genes wingless (wg), decapentaplegic (dpp) and ptc. In the absence of hh, ptc represses the constitutive signaling activity of smo through fused (fu). Essential component of a signaling pathway which regulates the Duox-dependent gut immune response to bacterial uracil; required to activate Cad99C-dependent endosome formation, norpA-dependent Ca2+ mobilization and p38 MAPK, which are essential steps in the Duox-dependent production of reactive oxygen species (ROS) in response to intestinal bacterial infection. During photoreceptor differentiation, it up-regulates transcription of Ubr3, which in turn promotes the hh-signaling pathway by mediating the ubiquitination and degradation of cos. This chain is Protein hedgehog, found in Drosophila persimilis (Fruit fly).